The chain runs to 135 residues: Small ribosomal subunit protein bS16 (135 aa).

Belongs to the bacterial ribosomal protein bS16 family.

The protein is Small ribosomal subunit protein bS16 of Prosthecochloris aestuarii (strain DSM 271 / SK 413).